A 400-amino-acid polypeptide reads, in one-letter code: Lysophospholipid transporter LplT (400 aa).

12 consecutive transmembrane segments (helical) span residues 19-39 (VIVA…ATLA), 53-73 (VLQM…GQIA), 91-111 (AGAA…LVGI), 139-159 (MMEA…GVLA), 164-184 (IAAL…NLFI), 195-213 (SWRL…VVLW), 227-247 (LFWG…PVAL), 257-277 (YLNA…AKLV), 281-301 (TVSR…IFSL), 304-324 (ALLP…FFVV), 352-372 (NSAM…GVPA), and 373-393 (VAIG…LWIW).

Belongs to the major facilitator superfamily. LplT (TC 2.A.1.42) family.

Its subcellular location is the cell inner membrane. Functionally, catalyzes the facilitated diffusion of 2-acyl-glycero-3-phosphoethanolamine (2-acyl-GPE) into the cell. This chain is Lysophospholipid transporter LplT, found in Salmonella paratyphi B (strain ATCC BAA-1250 / SPB7).